The primary structure comprises 553 residues: Solute carrier family 22 member 12 (553 aa).

Residues Phe16–Met36 form a helical membrane-spanning segment. Residues Asn56, Asn102, and Asn107 are each glycosylated (N-linked (GlcNAc...) asparagine). Transmembrane regions (helical) follow at residues Pro146–Ala166, Leu182–Phe202, Phe204–Trp224, Leu232–Ala252, Met260–Pro280, Phe351–Leu371, Ile378–Leu398, Leu407–Pro427, Ser435–Phe455, Met466–Val486, and Trp495–Leu515. Phosphoserine is present on Ser534.

The protein belongs to the major facilitator (TC 2.A.1) superfamily. Organic cation transporter (TC 2.A.1.19) family. Interacts with PDZK1. N-glycosylated. Expressed in the proximal tubular epithelial cells in kidney.

It is found in the apical cell membrane. It catalyses the reaction urate(out) + (S)-lactate(in) = urate(in) + (S)-lactate(out). It carries out the reaction nicotinate(in) + urate(out) = nicotinate(out) + urate(in). The enzyme catalyses urate(out) + n chloride(in) = urate(in) + n chloride(out). The catalysed reaction is orotate(out) + nicotinate(in) = orotate(in) + nicotinate(out). Functionally, electroneutral antiporter that translocates urate across the apical membrane of proximal tubular cells in exchange for monovalent organic or inorganic anions. Involved in renal reabsorption of urate and helps maintaining blood levels of uric acid. Mediates urate uptake by an exchange with organic anions such as (S)-lactate and nicotinate, and inorganic anion Cl(-). Other inorganic anions such as Br(-), I(-) and NO3(-) may also act as counteranions that exchange for urate. Also mediates orotate tubular uptake coupled with nicotinate efflux and to a lesser extent with lactate efflux, therefore displaying a potential role in orotate renal reabsorption. Orotate transport is Cl(-)-dependent. This Rattus norvegicus (Rat) protein is Solute carrier family 22 member 12 (Slc22a12).